The primary structure comprises 594 residues: Potassium-transporting ATPase potassium-binding subunit (594 aa).

The next 10 helical transmembrane spans lie at Ala-3–Leu-23, Ala-67–Leu-87, Ala-136–Val-156, Leu-179–Val-199, Leu-287–Val-307, Val-314–Phe-334, Gly-415–Gly-435, Val-453–Leu-473, Val-519–Leu-539, and Leu-562–Ala-582.

Belongs to the KdpA family. The system is composed of three essential subunits: KdpA, KdpB and KdpC.

The protein localises to the cell inner membrane. Its function is as follows. Part of the high-affinity ATP-driven potassium transport (or Kdp) system, which catalyzes the hydrolysis of ATP coupled with the electrogenic transport of potassium into the cytoplasm. This subunit binds the periplasmic potassium ions and delivers the ions to the membrane domain of KdpB through an intramembrane tunnel. This chain is Potassium-transporting ATPase potassium-binding subunit, found in Bordetella pertussis (strain Tohama I / ATCC BAA-589 / NCTC 13251).